A 287-amino-acid chain; its full sequence is MVNDLTPHFEDVQAHYDLSDDFFRLFLDPTQTYSCAHFEREDMTLEEAQIAKIDLALGKLGLQPGMTLLDIGCGWGATMRRAIAQYDVNVVGLTLSKNQAAHVQKSFDEMDTPRDRRVLLAGWEQFNEPVDRIVSIGAFEHFGHDRHADFFARAHKILPPDGVLLLHTITGLTRQQMVDHGLPLTLWLARFLKFIATEIFPGGQPPTIEMVEEQSAKTGFTLTRRQSLQPHYARTLDLWAEALQEHKSEAIAIQSEEVYERYMKYLTGCAKLFRVGYIDVNQFTLAK.

S-adenosyl-L-methionine-binding positions include 33 to 34 (YS), 72 to 74 (GCG), 94 to 99 (TLSKNQ), 123 to 124 (WE), and Ile-136. Residue Cys-269 is part of the active site.

This sequence belongs to the CFA/CMAS family.

The enzyme catalyses a 1-acyl-2-(9Z)-enoyl-sn-glycero-3-phospholipid + S-adenosyl-L-methionine = a 1-acyl-2-(9-cyclopronane)-acyl-sn-glycero-3-phospholipid + S-adenosyl-L-homocysteine + H(+). It participates in lipid metabolism; mycolic acid biosynthesis. Its function is as follows. Catalyzes the conversion of a double bond to a cis cyclopropane ring at the distal position of an alpha mycolic acid via the transfer of a methylene group from S-adenosyl-L-methionine. MmaA2 also catalyzes the biosynthesis of the cis-cyclopropanated methoxymycolates. Cyclopropanated mycolic acids are key factors participating in cell envelope permeability, host immunomodulation and persistence. The protein is Cyclopropane mycolic acid synthase MmaA2 (mmaA2) of Mycobacterium tuberculosis (strain ATCC 25177 / H37Ra).